The primary structure comprises 1107 residues: uncharacterized protein (1107 aa).

The segment covering 180–204 (SGNGSSGGNNNNNNNSLNNSNNSIG) has biased composition (low complexity). Disordered regions lie at residues 180 to 251 (SGNG…SGNN) and 501 to 530 (LMNINNNNNNNNSNNNNNNNDQNKDKDNQM). A compositionally biased stretch (gly residues) spans 205 to 215 (SSGGNGGGGSN). The span at 219 to 237 (PSMSPQFTSISKTNSPQII) shows a compositional bias: polar residues. Composition is skewed to low complexity over residues 238 to 251 (NTSSNNLNSSSGNN) and 501 to 521 (LMNINNNNNNNNSNNNNNNND). 2 coiled-coil regions span residues 789–816 (KKDIIEHLTQRHNQYQSNINEDEQIYRE) and 940–1012 (NIDH…NMLK).

This is an uncharacterized protein from Dictyostelium discoideum (Social amoeba).